The sequence spans 832 residues: Protein P (832 aa).

Positions 1-177 (MPLSYQHFRR…FCGSPYSWEQ (177 aa)) are terminal protein domain (TP). The segment at 178 to 335 (KLQHGAESFH…YCLSHIVNLL (158 aa)) is spacer. Disordered stretches follow at residues 186–229 (FHQQ…QGRS) and 275–305 (YPTV…RSQS). Residues 336-679 (EDWGPCTEHG…YMNLYPVARQ (344 aa)) form a polymerase/reverse transcriptase domain (RT) region. Positions 346–589 (EHHIRIPRTP…YSLHFMGYVI (244 aa)) constitute a Reverse transcriptase domain. Residues Asp418, Asp540, and Asp541 each coordinate Mg(2+).

This sequence belongs to the hepadnaviridae P protein family.

The enzyme catalyses DNA(n) + a 2'-deoxyribonucleoside 5'-triphosphate = DNA(n+1) + diphosphate. It catalyses the reaction Endonucleolytic cleavage to 5'-phosphomonoester.. Activated by host HSP70 and HSP40 in vitro to be able to bind the epsilon loop of the pgRNA. Because deletion of the RNase H region renders the protein partly chaperone-independent, the chaperones may be needed indirectly to relieve occlusion of the RNA-binding site by this domain. Inhibited by several reverse-transcriptase inhibitors: Lamivudine, Adefovir and Entecavir. In terms of biological role, multifunctional enzyme that converts the viral RNA genome into dsDNA in viral cytoplasmic capsids. This enzyme displays a DNA polymerase activity that can copy either DNA or RNA templates, and a ribonuclease H (RNase H) activity that cleaves the RNA strand of RNA-DNA heteroduplexes in a partially processive 3'- to 5'-endonucleasic mode. Neo-synthesized pregenomic RNA (pgRNA) are encapsidated together with the P protein, and reverse-transcribed inside the nucleocapsid. Initiation of reverse-transcription occurs first by binding the epsilon loop on the pgRNA genome, and is initiated by protein priming, thereby the 5'-end of (-)DNA is covalently linked to P protein. Partial (+)DNA is synthesized from the (-)DNA template and generates the relaxed circular DNA (RC-DNA) genome. After budding and infection, the RC-DNA migrates in the nucleus, and is converted into a plasmid-like covalently closed circular DNA (cccDNA). The activity of P protein does not seem to be necessary for cccDNA generation, and is presumably released from (+)DNA by host nuclear DNA repair machinery. The chain is Protein P from Homo sapiens (Human).